A 366-amino-acid chain; its full sequence is RNA 3'-terminal phosphate cyclase (366 aa).

6 residues coordinate ATP: Q104, P131, Y294, D297, Q298, and H320. H320 serves as the catalytic Tele-AMP-histidine intermediate.

The protein belongs to the RNA 3'-terminal cyclase family. Type 1 subfamily.

The protein localises to the nucleus. Its subcellular location is the nucleoplasm. The enzyme catalyses a 3'-end 3'-phospho-ribonucleotide-RNA + ATP = a 3'-end 2',3'-cyclophospho-ribonucleotide-RNA + AMP + diphosphate. In terms of biological role, catalyzes the conversion of 3'-phosphate to a 2',3'-cyclic phosphodiester at the end of RNA. The mechanism of action of the enzyme occurs in 3 steps: (A) adenylation of the enzyme by ATP; (B) transfer of adenylate to an RNA-N3'P to produce RNA-N3'PP5'A; (C) and attack of the adjacent 2'-hydroxyl on the 3'-phosphorus in the diester linkage to produce the cyclic end product. Likely functions in some aspects of cellular RNA processing. Function plays an important role in regulating axon regeneration by inhibiting central nervous system (CNS) axon regeneration following optic nerve injury. The chain is RNA 3'-terminal phosphate cyclase (RTCA) from Macaca fascicularis (Crab-eating macaque).